The following is a 97-amino-acid chain: Large ribosomal subunit protein eL30 (97 aa).

The protein belongs to the eukaryotic ribosomal protein eL30 family.

The protein is Large ribosomal subunit protein eL30 of Methanoregula boonei (strain DSM 21154 / JCM 14090 / 6A8).